The following is a 722-amino-acid chain: Probable cation-transporting ATPase HI_0290 (722 aa).

In terms of domain architecture, HMA spans 9-75 (KKISIQIGGM…IIHKTGFSAH (67 aa)). Residues cysteine 20 and cysteine 23 each contribute to the a metal cation site. Helical transmembrane passes span 94-114 (LIVL…MIGG), 118-138 (LMLP…WLAI), 157-177 (VLVS…LFYH), 180-200 (HAMG…VSLG), 340-360 (VFVP…YILT), and 373-393 (VLVI…IMVG). Aspartate 422 functions as the 4-aspartylphosphate intermediate in the catalytic mechanism. Transmembrane regions (helical) follow at residues 523-543 (IWQI…GAFA), 608-628 (LGHI…LASA), 675-695 (LFFA…GFLS), and 697-717 (IIAG…ALRL). Positions 617 and 621 each coordinate Mg(2+).

The protein belongs to the cation transport ATPase (P-type) (TC 3.A.3) family. Type IB subfamily.

The protein localises to the cell membrane. It carries out the reaction ATP + H2O = ADP + phosphate + H(+). This is Probable cation-transporting ATPase HI_0290 from Haemophilus influenzae (strain ATCC 51907 / DSM 11121 / KW20 / Rd).